A 350-amino-acid polypeptide reads, in one-letter code: MRASTACLVALLAPFYISALPVEYFYGDEQQPIEEGAENSAVFEQDRELIGLFNPSKEIGQVSGLAVNKNGHIVAFHRSGRVWDEKSFNDHETFNKDLGVINNKTIAIISREKKVIDEFGAGLFYMPHGLTIDNNGDYWVTDVGSHQVHKIDAKTQKIVMSLGEKMVPGEDQAHFCKPTDVAVAKNGHIFVADGYCNSRILKFDAKGNLMAQINAATEENQPSEFVVPHSLSLIEDMNIVCVADRENQRVQCFSAGLSEGDRTLPTGIPITSATDIGRVFAIREREHYLIGVTGNSEDVEAQMFSIDMQTGKTETFAKGVRNTHALAIAADGVMFVSQLEPSRILEIRLL.

The signal sequence occupies residues 1–19 (MRASTACLVALLAPFYISA). The NHL 1 repeat unit spans residues 46–90 (DRELIGLFNPSKEIGQVSGLAVNKNGHIVAFHRSGRVWDEKSFND). N-linked (GlcNAc...) asparagine glycosylation is present at asparagine 103. 3 NHL repeats span residues 113–154 (KKVI…IDAK), 162–206 (LGEK…FDAK), and 212–256 (QINA…FSAG). Cystine bridges form between cysteine 176-cysteine 196 and cysteine 241-cysteine 252.

This sequence belongs to the peptidyl-alpha-hydroxyglycine alpha-amidating lyase family. The cofactor is Zn(2+).

It localises to the secreted. The catalysed reaction is a [peptide]-C-terminal (2S)-2-hydroxyglycine = a [peptide]-C-terminal amide + glyoxylate. Probable lyase that catalyzes an essential reaction in C-terminal alpha-amidation of peptides. Mediates the dismutation of the unstable peptidyl(2-hydroxyglycine) intermediate to glyoxylate and the corresponding desglycine peptide amide. C-terminal amidation of peptides such as neuropeptides is essential for full biological activity. The sequence is that of Probable peptidyl-alpha-hydroxyglycine alpha-amidating lyase pgal-1 from Caenorhabditis elegans.